The sequence spans 860 residues: Protein argonaute-3 (860 aa).

An N-acetylmethionine modification is found at M1. Positions 230-349 constitute a PAZ domain; it reads PVIQFMCEVL…LPLEVCNIVA (120 aa). The Piwi domain maps to 518–819; it reads LIIVILPGKT…VAFRARYHLV (302 aa). The interval 530–567 is interaction with guide RNA; that stretch reads YAEVKRVGDTLLGMATQCVQVKNVIKTSPQTLSNLCLK. A divalent metal cation-binding residues include D598, E638, and D670. The interaction with guide RNA stretch occupies residues 758–805; sequence QGTSRPSHYHVLWDDNFFTADELQLLTYQLCHTYVRCTRSVSIPAPAY. Residue H808 coordinates a divalent metal cation. S825 carries the phosphoserine modification.

It belongs to the argonaute family. Ago subfamily. Interacts with EIF4B, IMP8, PRMT5 and TNRC6B. Interacts with APOBEC3F, APOBEC3G and APOBEC3H. Interacts with EDC4. Post-translationally, ubiquitinated on surface-exposed lysines by a SCF-like E3 ubiquitin-protein ligase complex containing ZSWIM8 during target-directed microRNA degradation (TDMD), a process that mediates degradation of microRNAs (miRNAs). Ubiquitination by the SCF-like E3 ubiquitin-protein ligase complex containing ZSWIM8 leads to its subsequent degradation, thereby exposing miRNAs for degradation. ZSWIM8 recognizes and binds AGO3 when it is engaged with a TDMD target.

The protein resides in the cytoplasm. It localises to the P-body. The enzyme catalyses Endonucleolytic cleavage to 5'-phosphomonoester.. Required for RNA-mediated gene silencing (RNAi). Binds to short RNAs such as microRNAs (miRNAs) and represses the translation of mRNAs which are complementary to them. Proposed to be involved in stabilization of small RNA derivates (siRNA) derived from processed RNA polymerase III-transcribed Alu repeats containing a DR2 retinoic acid response element (RARE) in stem cells and in the subsequent siRNA-dependent degradation of a subset of RNA polymerase II-transcribed coding mRNAs by recruiting a mRNA decapping complex involving EDC4. Possesses RNA slicer activity but only on select RNAs bearing 5'- and 3'-flanking sequences to the region of guide-target complementarity. The polypeptide is Protein argonaute-3 (Ago3) (Mus musculus (Mouse)).